The primary structure comprises 388 residues: Chorismate synthase (388 aa).

Residues Arg39 and Arg45 each contribute to the NADP(+) site. FMN contacts are provided by residues 132-134, 251-252, Gly296, 311-315, and Arg337; these read RSS, NA, and KPIPT.

This sequence belongs to the chorismate synthase family. In terms of assembly, homotetramer. It depends on FMNH2 as a cofactor.

It catalyses the reaction 5-O-(1-carboxyvinyl)-3-phosphoshikimate = chorismate + phosphate. Its pathway is metabolic intermediate biosynthesis; chorismate biosynthesis; chorismate from D-erythrose 4-phosphate and phosphoenolpyruvate: step 7/7. Functionally, catalyzes the anti-1,4-elimination of the C-3 phosphate and the C-6 proR hydrogen from 5-enolpyruvylshikimate-3-phosphate (EPSP) to yield chorismate, which is the branch point compound that serves as the starting substrate for the three terminal pathways of aromatic amino acid biosynthesis. This reaction introduces a second double bond into the aromatic ring system. The polypeptide is Chorismate synthase (Staphylococcus aureus (strain MW2)).